A 272-amino-acid chain; its full sequence is Shikimate dehydrogenase (NADP(+)) (272 aa).

Residues 14-16 (SRS) and Thr-61 each bind shikimate. Lys-65 serves as the catalytic Proton acceptor. Position 77 (Glu-77) interacts with NADP(+). Shikimate-binding residues include Asn-86 and Asp-102. NADP(+) contacts are provided by residues 126-130 (GVGGA), 149-154 (NRTFPR), and Met-213. Shikimate is bound at residue Tyr-215. Residue Gly-237 coordinates NADP(+).

The protein belongs to the shikimate dehydrogenase family. In terms of assembly, homodimer.

The catalysed reaction is shikimate + NADP(+) = 3-dehydroshikimate + NADPH + H(+). It participates in metabolic intermediate biosynthesis; chorismate biosynthesis; chorismate from D-erythrose 4-phosphate and phosphoenolpyruvate: step 4/7. In terms of biological role, involved in the biosynthesis of the chorismate, which leads to the biosynthesis of aromatic amino acids. Catalyzes the reversible NADPH linked reduction of 3-dehydroshikimate (DHSA) to yield shikimate (SA). This Sodalis glossinidius (strain morsitans) protein is Shikimate dehydrogenase (NADP(+)).